The primary structure comprises 99 residues: Small ribosomal subunit protein bS20 (99 aa).

The protein belongs to the bacterial ribosomal protein bS20 family.

Functionally, binds directly to 16S ribosomal RNA. This chain is Small ribosomal subunit protein bS20, found in Thermotoga neapolitana (strain ATCC 49049 / DSM 4359 / NBRC 107923 / NS-E).